The following is a 439-amino-acid chain: uncharacterized protein (439 aa).

CBS domains lie at Leu-195–Lys-254 and Met-256–Gln-314.

This is an uncharacterized protein from Bacillus subtilis (strain 168).